The sequence spans 111 residues: Small ribosomal subunit protein bS16 (111 aa).

The protein belongs to the bacterial ribosomal protein bS16 family.

The polypeptide is Small ribosomal subunit protein bS16 (Rickettsia typhi (strain ATCC VR-144 / Wilmington)).